A 397-amino-acid chain; its full sequence is Zinc finger CCCH domain-containing protein 33 (397 aa).

C3H1-type zinc fingers lie at residues 40–68, 85–113, 131–159, 274–302, and 320–348; these read RPGE…HPRD, RIGQ…HPRN, RSNE…HPQP, RPGQ…HPRD, and RPGE…HPMR. The segment at 361 to 397 is disordered; that stretch reads EVVETSTGKSRRLSVSETRQAATTSSGKDTTIDNTQQ. Residues 364–397 are compositionally biased toward polar residues; the sequence is ETSTGKSRRLSVSETRQAATTSSGKDTTIDNTQQ.

It localises to the nucleus. This chain is Zinc finger CCCH domain-containing protein 33 (ZFN1), found in Arabidopsis thaliana (Mouse-ear cress).